Consider the following 192-residue polypeptide: Leucine-rich repeat-containing protein 51 (192 aa).

LRR repeat units lie at residues Met-50–Val-71, Asn-80–Phe-101, and Asn-103–Ala-124. In terms of domain architecture, LRRCT spans Asn-137–Trp-175.

It localises to the cytoplasm. In Bos taurus (Bovine), this protein is Leucine-rich repeat-containing protein 51.